A 625-amino-acid polypeptide reads, in one-letter code: Thrombopoietin receptor (625 aa).

The first 25 residues, Met-1–Ser-25, serve as a signal peptide directing secretion. At Gln-26–Trp-482 the chain is on the extracellular side. N-linked (GlcNAc...) asparagine glycosylation is present at Asn-117. Fibronectin type-III domains lie at Asn-178 to Val-270 and Pro-383 to Glu-479. Residues Trp-465–Ser-469 carry the WSXWS motif motif. Residues Ile-483–Leu-504 traverse the membrane as a helical segment. Topologically, residues Lys-505–Pro-625 are cytoplasmic. A Box 1 motif motif is present at residues Leu-519–His-527. Residues Lys-544 and Lys-564 each participate in a glycyl lysine isopeptide (Lys-Gly) (interchain with G-Cter in ubiquitin) cross-link. Phosphotyrosine occurs at positions 616 and 621.

It belongs to the type I cytokine receptor family. Type 1 subfamily. Homodimer. Interacts with ATXN2L. Interacts with JAK2 and TYK2; these interactions increase MPL localization to the cell membrane. Interacts with THPO. Interacts with SHIP/INPP5D. Interacts with kinases BTK and SYK. Post-translationally, ubiquitination at Lys-544 and Lys-564 targets MPL for degradation by both the lysosomal and proteasomal pathways. The E3 ubiquitin-protein ligase CBL significantly contributes to this ubiquitination.

It is found in the cell membrane. It localises to the golgi apparatus. The protein resides in the cell surface. Its function is as follows. Receptor for thrombopoietin that regulates hematopoietic stem cell renewal, megakaryocyte differentiation, and platelet formation. Upon activation by THPO, induces rapid tyrosine phosphorylation and activation of JAK2, providing docking sites for many signaling proteins such as STAT5, SHIP/INPP5D, GRB2, SOS1 and PI3K. In turn, These signaling cascades lead to the proliferation, survival, and differentiation of megakaryocytes, ultimately leading to increased platelet production. Functionally, acts as an inhibitor of thrombopoietin signaling by promoting protein down-regulation of full-length isoform Mpl-fl. This Mus musculus (Mouse) protein is Thrombopoietin receptor (Mpl).